The sequence spans 85 residues: DNA-directed RNA polymerase subunit omega (85 aa).

It belongs to the RNA polymerase subunit omega family. In terms of assembly, the RNAP catalytic core consists of 2 alpha, 1 beta, 1 beta' and 1 omega subunit. When a sigma factor is associated with the core the holoenzyme is formed, which can initiate transcription.

The catalysed reaction is RNA(n) + a ribonucleoside 5'-triphosphate = RNA(n+1) + diphosphate. Its function is as follows. Promotes RNA polymerase assembly. Latches the N- and C-terminal regions of the beta' subunit thereby facilitating its interaction with the beta and alpha subunits. This Latilactobacillus sakei subsp. sakei (strain 23K) (Lactobacillus sakei subsp. sakei) protein is DNA-directed RNA polymerase subunit omega.